We begin with the raw amino-acid sequence, 113 residues long: Hydrogenase maturation factor HypA (113 aa).

Histidine 2 is a binding site for Ni(2+). Residues cysteine 73, cysteine 76, cysteine 89, and cysteine 92 each contribute to the Zn(2+) site.

The protein belongs to the HypA/HybF family.

Functionally, involved in the maturation of [NiFe] hydrogenases. Required for nickel insertion into the metal center of the hydrogenase. This chain is Hydrogenase maturation factor HypA, found in Actinobacillus succinogenes (strain ATCC 55618 / DSM 22257 / CCUG 43843 / 130Z).